The sequence spans 475 residues: ATP synthase subunit beta (475 aa).

154-161 (GGAGVGKT) lines the ATP pocket.

Belongs to the ATPase alpha/beta chains family. In terms of assembly, F-type ATPases have 2 components, CF(1) - the catalytic core - and CF(0) - the membrane proton channel. CF(1) has five subunits: alpha(3), beta(3), gamma(1), delta(1), epsilon(1). CF(0) has three main subunits: a(1), b(2) and c(9-12). The alpha and beta chains form an alternating ring which encloses part of the gamma chain. CF(1) is attached to CF(0) by a central stalk formed by the gamma and epsilon chains, while a peripheral stalk is formed by the delta and b chains.

It localises to the cell inner membrane. It catalyses the reaction ATP + H2O + 4 H(+)(in) = ADP + phosphate + 5 H(+)(out). Functionally, produces ATP from ADP in the presence of a proton gradient across the membrane. The catalytic sites are hosted primarily by the beta subunits. The sequence is that of ATP synthase subunit beta from Hyphomonas neptunium (strain ATCC 15444).